The following is a 215-amino-acid chain: Sodium channel regulatory subunit beta-2 (215 aa).

The first 29 residues, 1–29 (MHRDAWLPRPAFSLTGLSLFFSLVPSGRS), serve as a signal peptide directing secretion. At 30–157 (MEVTVPTTLS…LEVPPERDST (128 aa)) the chain is on the extracellular side. The Ig-like C2-type domain maps to 32–154 (VTVPTTLSVL…QVLLEVPPER (123 aa)). N-linked (GlcNAc...) asparagine glycans are attached at residues Asn-42, Asn-66, and Asn-74. 2 disulfide bridges follow: Cys-50-Cys-127 and Cys-72-Cys-75. A helical membrane pass occupies residues 158 to 179 (VAVIVGASVGGFLAVVILVLMV). Topologically, residues 180–215 (VKCVRRKKEQKLSTDDLKTEEEGKTDGEGNAEDGAK) are cytoplasmic. The disordered stretch occupies residues 187–215 (KEQKLSTDDLKTEEEGKTDGEGNAEDGAK). The segment covering 189-215 (QKLSTDDLKTEEEGKTDGEGNAEDGAK) has biased composition (basic and acidic residues). A Phosphoserine modification is found at Ser-192. Thr-204 carries the post-translational modification Phosphothreonine.

The protein belongs to the sodium channel auxiliary subunit SCN2B (TC 8.A.17) family. As to quaternary structure, a voltage-gated sodium (Nav) channel consists of an ion-conducting pore-forming alpha subunit functional on its own that is regulated by one or more beta subunits. The beta subunit SCN2B is disulfide-linked to the pore-forming alpha subunit. Interacts with SCN1A; regulatory subunit of SCN1A/Nav1.1. Interacts with SCN2A; regulatory subunit of SCN2A/Nav1.2. Interacts with SCN3A; regulatory subunit of SCN3A/Nav1.3. Interacts with SCN5A; regulatory subunit of SCN5A/Nav1.5. Interacts with SCN8A; regulatory subunit of SCN8A/Nav1.6. Interacts with SCN9A; regulatory subunit of SCN9A/Nav1.7. Interacts with SCN10A; regulatory subunit of SCN10A/Nav1.8. Interacts with TNR; may play a crucial role in clustering and regulation of activity of SCN2B-containing Nav channels at nodes of Ranvier.

The protein resides in the cell membrane. Its subcellular location is the cell projection. It localises to the axon. Functionally, regulatory subunit of multiple voltage-gated sodium (Nav) channels directly mediating the depolarization of excitable membranes. Navs, also called VGSCs (voltage-gated sodium channels) or VDSCs (voltage-dependent sodium channels), operate by switching between closed and open conformations depending on the voltage difference across the membrane. In the open conformation they allow Na(+) ions to selectively pass through the pore, along their electrochemical gradient. The influx of Na+ ions provokes membrane depolarization, initiating the propagation of electrical signals throughout cells and tissues. The accessory beta subunits participate in localization and functional modulation of the Nav channels. Modulates the activity of SCN1A/Nav1.1, SCN2A/Nav1.2, SCN2A/Nav1.3, SCN5A/Nav1.5, SCN8A/Nav1.6, SCN9A/Nav1.7 and SCN10A/Nav1.8. This is Sodium channel regulatory subunit beta-2 from Rattus norvegicus (Rat).